The chain runs to 301 residues: D-alanine--D-alanine ligase (301 aa).

Positions 99-294 (KCILKAANIR…FPELIDMIID (196 aa)) constitute an ATP-grasp domain. 126 to 181 (IEKMGYPVVVKPTHGGSSVATFIIKEEKDIKDAVIEGFKWDSEVIIEKFIKGDEIT) is an ATP binding site. Residues Asp-248, Glu-261, and Asn-263 each coordinate Mg(2+).

Belongs to the D-alanine--D-alanine ligase family. It depends on Mg(2+) as a cofactor. Requires Mn(2+) as cofactor.

It is found in the cytoplasm. The enzyme catalyses 2 D-alanine + ATP = D-alanyl-D-alanine + ADP + phosphate + H(+). The protein operates within cell wall biogenesis; peptidoglycan biosynthesis. In terms of biological role, cell wall formation. The polypeptide is D-alanine--D-alanine ligase (Clostridium botulinum (strain Alaska E43 / Type E3)).